The following is a 267-amino-acid chain: Glutamate 5-kinase (267 aa).

Residue K17 participates in ATP binding. Positions 57, 144, and 156 each coordinate substrate. ATP is bound by residues 176–177 (SD) and 218–224 (TGGMATK).

This sequence belongs to the glutamate 5-kinase family.

The protein resides in the cytoplasm. The catalysed reaction is L-glutamate + ATP = L-glutamyl 5-phosphate + ADP. It participates in amino-acid biosynthesis; L-proline biosynthesis; L-glutamate 5-semialdehyde from L-glutamate: step 1/2. In terms of biological role, catalyzes the transfer of a phosphate group to glutamate to form L-glutamate 5-phosphate. The polypeptide is Glutamate 5-kinase (Clostridium acetobutylicum (strain ATCC 824 / DSM 792 / JCM 1419 / IAM 19013 / LMG 5710 / NBRC 13948 / NRRL B-527 / VKM B-1787 / 2291 / W)).